We begin with the raw amino-acid sequence, 312 residues long: MDNDDYIWLDYLTVEQPNQEKTDISVKHYYGIDIKTDKYLQNAIDIWELINKYGKKYFCNYGGETFQINIGDRFYVAHFPSQCLNNGCKYPVLIFLHGLTGYSWHSALDKTGLIELANQNNFIVLFGQGNGEITRPVRDKYGGVSFGDIYWQIENPELDMDYIRNVMNLQGTIEYCRQDDLNLLELRKMFSDKIYLIGYSNGAMYSFNMCFYDLHFSGICSMMGGYGGLAGYSNSKISEIVDRPINISLDIPIIILSGSLDEYLPASKKAFDILLGKNFSNVKFLSIPDRKHTYSRDFEKYIWEFFFTSTKN.

Residues Ser200, Asp261, and His292 each act as charge relay system in the active site.

This sequence belongs to the AB hydrolase superfamily. AB hydrolase 2 family.

This is an uncharacterized protein from Acanthamoeba polyphaga mimivirus (APMV).